The sequence spans 249 residues: Putative TrmH family tRNA/rRNA methyltransferase (249 aa).

S-adenosyl-L-methionine is bound by residues Gly-196, Ile-216, and Leu-225.

Belongs to the class IV-like SAM-binding methyltransferase superfamily. RNA methyltransferase TrmH family.

This is Putative TrmH family tRNA/rRNA methyltransferase from Staphylococcus saprophyticus subsp. saprophyticus (strain ATCC 15305 / DSM 20229 / NCIMB 8711 / NCTC 7292 / S-41).